The sequence spans 110 residues: uncharacterized protein (110 aa).

The segment at Ala-85–Val-110 is disordered. The segment covering Thr-101–Val-110 has biased composition (polar residues).

This is an uncharacterized protein from Saccharomyces cerevisiae (strain ATCC 204508 / S288c) (Baker's yeast).